Reading from the N-terminus, the 257-residue chain is Small ribosomal subunit protein uS2 (257 aa).

It belongs to the universal ribosomal protein uS2 family.

In Bartonella quintana (strain Toulouse) (Rochalimaea quintana), this protein is Small ribosomal subunit protein uS2.